The primary structure comprises 463 residues: MVAAAVAAAEQVVAALREECATPAARLDGVAAAMAGEMAAGLAEEGGSKIKMIVSYVDNLPNGTEEGLFYALDLGGTNFRVLRVQLAGKEKRVVKRESREVSIPPHLMSGNSSELFGFIASALAKFVADEGHNAVFNDRQRELGFTFSFPVRQTSIASGTLIKWTKAFSIDDAVGEDVVAELQMAMEKQGLDMRVSALINDTVGTLAAGSYYDEDIVVGVILGTGSNAAYLEKANAIPKLEGELPKSGNMVINTEWGNFSSSCLPITEYDEALDKESLNPGEQIFEKLISGMYLGEIVRRVLLKISLQSSIFGNLDQTKLKTRFILRTPDISVMHHDGTPDLRIVAEKLADNLKITDTSLETRKMVVEICDIVTRRSARLAAAGIVGILRKIGRGVPGDKRKSVIAIDGGLYEHYTEFRQCLETTLTELLGEEASKSVAVKLANDGSGLGAALIAAAHSQYLN.

The Hexokinase domain occupies 7-456 (AAAEQVVAAL…SGLGAALIAA (450 aa)). The tract at residues 62-199 (NGTEEGLFYA…GLDMRVSALI (138 aa)) is hexokinase small subdomain. 3 residues coordinate ADP: Gly76, Thr77, and Asn78. Residues Thr165, Lys166, Asn200, and Asp201 each contribute to the D-glucose site. The tract at residues 200-445 (NDTVGTLAAG…KSVAVKLAND (246 aa)) is hexokinase large subdomain. Position 224 (Thr224) interacts with ADP. Asn227, Glu255, and Glu286 together coordinate D-glucose. Gly410 is an ADP binding site.

This sequence belongs to the hexokinase family. In terms of tissue distribution, expressed in roots, leaves, flowers, immature seeds and seed coat.

The protein resides in the cytoplasm. It catalyses the reaction a D-hexose + ATP = a D-hexose 6-phosphate + ADP + H(+). The catalysed reaction is D-fructose + ATP = D-fructose 6-phosphate + ADP + H(+). The enzyme catalyses D-glucose + ATP = D-glucose 6-phosphate + ADP + H(+). The protein operates within carbohydrate metabolism; hexose metabolism. It participates in carbohydrate degradation; glycolysis; D-glyceraldehyde 3-phosphate and glycerone phosphate from D-glucose: step 1/4. Its function is as follows. Fructose and glucose phosphorylating enzyme. Functions in sugar signaling via a glycolysis-dependent manner under aerobic conditions, but its signaling role is suppressed when oxygen is deficient. In Oryza sativa subsp. japonica (Rice), this protein is Hexokinase-7 (HXK7).